A 178-amino-acid chain; its full sequence is Large ribosomal subunit protein uL5 (178 aa).

This sequence belongs to the universal ribosomal protein uL5 family. Part of the 50S ribosomal subunit; part of the 5S rRNA/L5/L18/L25 subcomplex. Contacts the 5S rRNA and the P site tRNA. Forms a bridge to the 30S subunit in the 70S ribosome.

This is one of the proteins that bind and probably mediate the attachment of the 5S RNA into the large ribosomal subunit, where it forms part of the central protuberance. In the 70S ribosome it contacts protein S13 of the 30S subunit (bridge B1b), connecting the 2 subunits; this bridge is implicated in subunit movement. Contacts the P site tRNA; the 5S rRNA and some of its associated proteins might help stabilize positioning of ribosome-bound tRNAs. This Syntrophomonas wolfei subsp. wolfei (strain DSM 2245B / Goettingen) protein is Large ribosomal subunit protein uL5.